Here is a 289-residue protein sequence, read N- to C-terminus: Pantothenate synthetase (289 aa).

An ATP-binding site is contributed by 33–40; it reads MGYLHEGH. Residue His-40 is the Proton donor of the active site. Gln-70 is a (R)-pantoate binding site. Gln-70 provides a ligand contact to beta-alanine. 157–160 is an ATP binding site; it reads GEKD. Residue Gln-163 participates in (R)-pantoate binding. Residues Val-186 and 194-197 each bind ATP; that span reads LSSR.

This sequence belongs to the pantothenate synthetase family. As to quaternary structure, homodimer.

It localises to the cytoplasm. The catalysed reaction is (R)-pantoate + beta-alanine + ATP = (R)-pantothenate + AMP + diphosphate + H(+). Its pathway is cofactor biosynthesis; (R)-pantothenate biosynthesis; (R)-pantothenate from (R)-pantoate and beta-alanine: step 1/1. In terms of biological role, catalyzes the condensation of pantoate with beta-alanine in an ATP-dependent reaction via a pantoyl-adenylate intermediate. This is Pantothenate synthetase from Anaeromyxobacter dehalogenans (strain 2CP-C).